The sequence spans 551 residues: uncharacterized protein (551 aa).

Disordered regions lie at residues 66–111, 130–165, 180–229, and 277–303; these read GNNK…STNL, PEAT…EKSN, AFNP…LSNL, and AFTS…VPLS. Position 74 is a phosphoserine (Ser-74). Polar residues-rich tracts occupy residues 92 to 111 and 143 to 156; these read GFSN…STNL and VVNT…GTQE. A compositionally biased stretch (low complexity) spans 182 to 193; the sequence is NPSSVLPSNSSS. The span at 204-226 shows a compositional bias: polar residues; the sequence is KETYQPNTFRRSPLKNDTGSVEL. The span at 290 to 299 shows a compositional bias: low complexity; it reads TRPSSTRFPS.

This is an uncharacterized protein from Schizosaccharomyces pombe (strain 972 / ATCC 24843) (Fission yeast).